A 574-amino-acid polypeptide reads, in one-letter code: DNA polymerase I (574 aa).

The 3'-5' exonuclease domain occupies 4 to 161 (EYVTGEEGLK…ELFPKMRDML (158 aa)).

Belongs to the DNA polymerase type-A family.

The enzyme catalyses DNA(n) + a 2'-deoxyribonucleoside 5'-triphosphate = DNA(n+1) + diphosphate. This chain is DNA polymerase I (polA), found in Aquifex aeolicus (strain VF5).